The following is a 511-amino-acid chain: Maturase K (511 aa).

Belongs to the intron maturase 2 family. MatK subfamily.

It localises to the plastid. The protein resides in the chloroplast. Functionally, usually encoded in the trnK tRNA gene intron. Probably assists in splicing its own and other chloroplast group II introns. This chain is Maturase K, found in Poa pratensis (Kentucky bluegrass).